The following is a 114-amino-acid chain: V-type proton ATPase subunit G (114 aa).

S2 bears the N-acetylserine mark.

Belongs to the V-ATPase G subunit family. In terms of assembly, V-ATPase is a heteromultimeric enzyme composed of a peripheral catalytic V1 complex (components A to H) attached to an integral membrane V0 proton pore complex (components: a, c, c', c'', d, e, f and VOA1).

The protein localises to the vacuole membrane. In terms of biological role, subunit of the V1 complex of vacuolar(H+)-ATPase (V-ATPase), a multisubunit enzyme composed of a peripheral complex (V1) that hydrolyzes ATP and a membrane integral complex (V0) that translocates protons. V-ATPase is responsible for acidifying and maintaining the pH of intracellular compartments. This is V-type proton ATPase subunit G from Saccharomyces cerevisiae (strain ATCC 204508 / S288c) (Baker's yeast).